A 295-amino-acid chain; its full sequence is Protein SSO2 (295 aa).

Topologically, residues 1-269 (MSNANPYENN…ARKARKNKIR (269 aa)) are cytoplasmic. Phosphoserine occurs at positions 31 and 34. Residues 39 to 100 (AFMNKINSIN…ATDLQYQLKA (62 aa)) are a coiled coil. The t-SNARE coiled-coil homology domain occupies 194–256 (LAEVQARHQE…EQGVGHTNKA (63 aa)). The chain crosses the membrane as a helical; Anchor for type IV membrane protein span at residues 270 to 291 (CLIICFIIFAIVVVVVVVPSVV). The Extracellular segment spans residues 292–295 (ETRK).

Belongs to the syntaxin family.

It is found in the membrane. Required for vesicle fusion with the plasma membrane. In Saccharomyces cerevisiae (strain ATCC 204508 / S288c) (Baker's yeast), this protein is Protein SSO2 (SSO2).